Consider the following 152-residue polypeptide: Superoxide dismutase [Cu-Zn] (152 aa).

His-44, His-46, and His-61 together coordinate Cu cation. Zn(2+) is bound by residues His-61, His-69, His-78, and Asp-81. His-118 lines the Cu cation pocket.

Belongs to the Cu-Zn superoxide dismutase family. As to quaternary structure, homodimer. It depends on Cu cation as a cofactor. Zn(2+) serves as cofactor.

The protein resides in the cytoplasm. It carries out the reaction 2 superoxide + 2 H(+) = H2O2 + O2. Its function is as follows. Destroys radicals which are normally produced within the cells and which are toxic to biological systems. The sequence is that of Superoxide dismutase [Cu-Zn] from Drosophila pseudoobscura pseudoobscura (Fruit fly).